Reading from the N-terminus, the 450-residue chain is Phosphoglucosamine mutase (450 aa).

The Phosphoserine intermediate role is filled by Ser-101. Ser-101, Asp-240, Asp-242, and Asp-244 together coordinate Mg(2+). Position 101 is a phosphoserine (Ser-101).

It belongs to the phosphohexose mutase family. Mg(2+) serves as cofactor. In terms of processing, activated by phosphorylation.

The enzyme catalyses alpha-D-glucosamine 1-phosphate = D-glucosamine 6-phosphate. Catalyzes the conversion of glucosamine-6-phosphate to glucosamine-1-phosphate. The protein is Phosphoglucosamine mutase of Streptococcus gordonii (strain Challis / ATCC 35105 / BCRC 15272 / CH1 / DL1 / V288).